Consider the following 351-residue polypeptide: Probable glucuronosyltransferase Os10g0205300 (351 aa).

At 1–11 (MAAPPCPPRRP) the chain is on the cytoplasmic side. Residues 12-32 (ISAPCFLLCFLLGFVAGLFPF) form a helical; Signal-anchor for type II membrane protein membrane-spanning segment. The Lumenal segment spans residues 33–351 (AHRHLHLDLH…PLKKEARPLL (319 aa)). Residues 138–169 (SSPVPDAPQDRPRRRGRRQDRPAVDSRARQRN) are disordered. A compositionally biased stretch (basic and acidic residues) spans 156–169 (QDRPAVDSRARQRN). N-linked (GlcNAc...) asparagine glycosylation is present at N259.

Belongs to the glycosyltransferase 43 family.

The protein localises to the golgi apparatus membrane. Its function is as follows. Involved in the synthesis of glucuronoxylan hemicellulose in secondary cell walls. This Oryza sativa subsp. japonica (Rice) protein is Probable glucuronosyltransferase Os10g0205300.